Here is a 165-residue protein sequence, read N- to C-terminus: Probable chemoreceptor glutamine deamidase CheD (165 aa).

It belongs to the CheD family.

It catalyses the reaction L-glutaminyl-[protein] + H2O = L-glutamyl-[protein] + NH4(+). Functionally, probably deamidates glutamine residues to glutamate on methyl-accepting chemotaxis receptors (MCPs), playing an important role in chemotaxis. In Geobacillus kaustophilus (strain HTA426), this protein is Probable chemoreceptor glutamine deamidase CheD.